A 1980-amino-acid polypeptide reads, in one-letter code: Sodium channel protein type 8 subunit alpha (1980 aa).

2 disordered regions span residues 1–20 and 28–62; these read MAARLLAPPGPDSFKPFTPE and RIAESKLKKPPKADGSHREDDEDSKPKPNSDLEAG. Residues 1–132 are Cytoplasmic-facing; sequence MAARLLAPPG…RIAIKILIHS (132 aa). A compositionally biased stretch (basic and acidic residues) spans 28-61; that stretch reads RIAESKLKKPPKADGSHREDDEDSKPKPNSDLEA. Residues 114-442 form an I repeat; sequence ILSPFNLIRR…KAMLEQLKKQ (329 aa). Residues 133–151 traverse the membrane as a helical segment; sequence VFSMIIMCTILTNCVFMTF. Topologically, residues 152–158 are extracellular; that stretch reads SNPPDWS. Residues 159 to 179 traverse the membrane as a helical segment; the sequence is KNVEYTFTGIYTFESLVKIIA. Topologically, residues 180–193 are cytoplasmic; that stretch reads RGFCIDGFTFLRDP. Residues 194–211 form a helical membrane-spanning segment; sequence WNWLDFSVIMMAYITEFV. Over 212–217 the chain is Extracellular; the sequence is NLGNVS. Residue Asn-215 is glycosylated (N-linked (GlcNAc...) asparagine). Residues 218–234 traverse the membrane as a helical segment; it reads ALRTFRVLRALKTISVI. Over 235–253 the chain is Cytoplasmic; the sequence is PGLKTIVGALIQSVKKLSD. The chain crosses the membrane as a helical span at residues 254-273; it reads VMILTVFCLSVFALIGLQLF. The Extracellular portion of the chain corresponds to 274 to 355; it reads MGNLRNKCVV…PNYGYTSFDT (82 aa). Cys-281 and Cys-333 are disulfide-bonded. Residues Asn-289, Asn-295, and Asn-308 are each glycosylated (N-linked (GlcNAc...) asparagine). A glycan (N-linked (GlcNAc...) (high mannose) asparagine) is linked at Asn-326. Positions 356 to 380 form an intramembrane region, pore-forming; that stretch reads FSWAFLALFRLMTQDYWENLYQLTL. Position 373 (Glu-373) interacts with Na(+). At 381–387 the chain is on the extracellular side; it reads RAAGKTY. Residues 388 to 408 form a helical membrane-spanning segment; that stretch reads MIFFVLVIFVGSFYLVNLILA. Residues 409–753 lie on the Cytoplasmic side of the membrane; sequence VVAMAYEEQN…EIVNLIVMDP (345 aa). Disordered stretches follow at residues 446 to 530 and 568 to 602; these read AQAA…KAFR and FRGPGRFRDPGSENEFADDEHSTVEESEGRRDSLF. Residues 474-486 are compositionally biased toward low complexity; sequence PRSSSEISKLSSK. Residues 489-500 show a composition bias toward basic residues; it reads KERRNRRKKRKQ. Composition is skewed to basic and acidic residues over residues 501 to 530 and 586 to 602; these read KELSEGEEKGDPEKVFKSESEDGMRRKAFR and DEHSTVEESEGRRDSLF. 2 positions are modified to phosphoserine: Ser-518 and Ser-520. The stretch at 735-1007 is one II repeat; it reads CHPYWIKLKE…QISVIRIKKG (273 aa). A helical membrane pass occupies residues 754-772; it reads FVDLAITICIVLNTLFMAM. At 773-783 the chain is on the extracellular side; that stretch reads EHHPMTPQFEH. A helical transmembrane segment spans residues 784–803; the sequence is VLAVGNLVFTGIFTAEMFLK. The Cytoplasmic segment spans residues 804-817; the sequence is LIAMDPYYYFQEGW. Residues 818–837 traverse the membrane as a helical segment; that stretch reads NIFDGFIVSLSLMELSLADV. Over 838–839 the chain is Extracellular; that stretch reads EG. The chain crosses the membrane as a helical span at residues 840-857; that stretch reads LSVLRSFRLLRVFKLAKS. At 858–873 the chain is on the cytoplasmic side; it reads WPTLNMLIKIIGNSVG. The chain crosses the membrane as a helical span at residues 874–892; it reads ALGNLTLVLAIIVFIFAVV. The Extracellular portion of the chain corresponds to 893–921; it reads GMQLFGKSYKECVCKINQDCELPRWHMHD. A disulfide bridge links Cys-906 with Cys-912. Residues 922–942 constitute an intramembrane region (pore-forming); sequence FFHSFLIVFRVLCGEWIETMW. 2 residues coordinate Na(+): Glu-936 and Glu-939. At 943–955 the chain is on the extracellular side; that stretch reads DCMEVAGQAMCLI. Cysteines 944 and 953 form a disulfide. Residues 956-976 traverse the membrane as a helical segment; the sequence is VFMMVMVIGNLVVLNLFLALL. Residues 977–1199 lie on the Cytoplasmic side of the membrane; that stretch reads LSSFSADNLA…TCFLIVEHNW (223 aa). Residues 1107-1148 are disordered; the sequence is NLNTEDVSSESDPEGSKDKLDDTSSSEGSTIDIKPEVEEVPV. The stretch at 1180 to 1495 is one III repeat; sequence LGKSWWILRK…KKYYNAMKKL (316 aa). A helical membrane pass occupies residues 1200–1217; the sequence is FETFIIFMILLSSGALAF. The Extracellular segment spans residues 1218–1230; the sequence is EDIYIEQRKTIRT. Residues 1231–1249 form a helical membrane-spanning segment; sequence ILEYADKVFTYIFILEMLL. Topologically, residues 1250 to 1263 are cytoplasmic; the sequence is KWTAYGFVKFFTNA. Residues 1264–1282 form a helical membrane-spanning segment; sequence WCWLDFLIVAVSLVSLIAN. Topologically, residues 1283–1290 are extracellular; the sequence is ALGYSELG. The helical transmembrane segment at 1291 to 1309 threads the bilayer; sequence AIKSLRTLRALRPLRALSR. Topologically, residues 1310 to 1326 are cytoplasmic; the sequence is FEGMRVVVNALVGAIPS. The helical transmembrane segment at 1327–1346 threads the bilayer; the sequence is IMNVLLVCLIFWLIFSIMGV. Over 1347-1399 the chain is Extracellular; sequence NLFAGKYHYCFNETSEIRFEIEDVNNKTECEKLMEGNNTEIRWKNVKINFDNV. Cys-1356 and Cys-1376 are oxidised to a cystine. Residues Asn-1358, Asn-1372, and Asn-1383 are each glycosylated (N-linked (GlcNAc...) asparagine). An intramembrane region (pore-forming) is located at residues 1400 to 1421; that stretch reads GAGYLALLQVATFKGWMDIMYA. The Extracellular portion of the chain corresponds to 1422 to 1438; it reads AVDSRKPDEQPKYEDNI. The chain crosses the membrane as a helical span at residues 1439–1460; it reads YMYIYFVIFIIFGSFFTLNLFI. The Cytoplasmic portion of the chain corresponds to 1461 to 1523; the sequence is GVIIDNFNQQ…IVFDFVTQQA (63 aa). Ser-1497 is subject to Phosphoserine; by PKC. The stretch at 1504-1801 is one IV repeat; sequence IPRPLNKIQG…WEKFDPDATQ (298 aa). Residues 1524–1541 traverse the membrane as a helical segment; that stretch reads FDIVIMMLICLNMVTMMV. Topologically, residues 1542–1552 are extracellular; the sequence is ETDTQSKQMEN. A helical membrane pass occupies residues 1553-1571; sequence ILYWINLVFVIFFTCECVL. Residues 1572–1583 are Cytoplasmic-facing; the sequence is KMFALRHYYFTI. Residues 1584–1601 traverse the membrane as a helical segment; sequence GWNIFDFVVVILSIVGMF. Over 1602–1614 the chain is Extracellular; that stretch reads LADIIEKYFVSPT. A helical membrane pass occupies residues 1615–1631; that stretch reads LFRVIRLARIGRILRLI. The Cytoplasmic segment spans residues 1632-1650; the sequence is KGAKGIRTLLFALMMSLPA. A helical membrane pass occupies residues 1651–1668; it reads LFNIGLLLFLVMFIFSIF. At 1669–1690 the chain is on the extracellular side; the sequence is GMSNFAYVKHEAGIDDMFNFET. Positions 1691-1713 form an intramembrane region, pore-forming; the sequence is FGNSMICLFQITTSAGWDGLLLP. Over 1714 to 1742 the chain is Extracellular; it reads ILNRPPDCSLDKEHPGSGFKGDCGNPSVG. Cys-1721 and Cys-1736 form a disulfide bridge. The helical transmembrane segment at 1743 to 1765 threads the bilayer; sequence IFFFVSYIIISFLIVVNMYIAII. Topologically, residues 1766–1980 are cytoplasmic; it reads LENFSVATEE…RQKEVRESKC (215 aa). In terms of domain architecture, IQ spans 1895 to 1924; it reads EEVSAVVLQRAYRGHLARRGFICKKTTSNK. Residues 1922-1980 are disordered; sequence SNKLENGGTHREKKESTPSTASLPSYDSVTKPEKEKQQRAEEGRRERAKRQKEVRESKC. A compositionally biased stretch (polar residues) spans 1938-1949; that stretch reads TPSTASLPSYDS. Over residues 1951–1980 the composition is skewed to basic and acidic residues; sequence TKPEKEKQQRAEEGRRERAKRQKEVRESKC.

The protein belongs to the sodium channel (TC 1.A.1.10) family. Nav1.6/SCN8A subfamily. The voltage-sensitive sodium channel consists of an ion-conducting pore-forming alpha subunit regulated by one or more beta-1 (SCN1B), beta-2 (SCN2B), beta-3 (SCN3B) and/or beta-4 (SCN4B) subunits. Beta-1 (SCN1B) and beta-3 (SCN3B) are non-covalently associated with alpha, while beta-2 (SCN2B) and beta-4 (SCN4B) are covalently linked by disulfide bonds. Interacts with NEDD4 and NEDD4L. Interacts with FGF13. Interacts with FGF14, GBG3, GBB2 and SCN1B. Interacts with TMEM233. Interacts with the conotoxin GVIIJ. Interacts with the spider beta/delta-theraphotoxin-Pre1a. Interacts with CALM1; the interaction modulates the inactivation rate of SCN8A. In terms of processing, may be ubiquitinated by NEDD4L; which would promote its endocytosis. Phosphorylation at Ser-1497 by PKC in a highly conserved cytoplasmic loop slows inactivation of the sodium channel and reduces peak sodium currents. Expressed in the hippocampus with increased expression in epileptic tissue compared to normal adjacent tissue (at protein level). In terms of tissue distribution, expressed in non-neuronal tissues, such as monocytes/macrophages.

The protein resides in the cell membrane. Its subcellular location is the cell projection. The protein localises to the axon. It is found in the cytoplasmic vesicle. It localises to the podosome. The catalysed reaction is Na(+)(in) = Na(+)(out). Inhibited by tetrodotoxin and, more weakly, by its metabolite 4,9-ah-tetrodotoxin. Pore-forming subunit of a voltage-gated sodium channel complex assuming opened or closed conformations in response to the voltage difference across membranes and through which sodium ions selectively pass along their electrochemical gradient. Contributes to neuronal excitability by regulating action potential threshold and propagation. Functionally, more specifically expressed in non-neuronal cells, could play a role in sodium release from intracellular compartments and participate in the control of podosomes formation and macrophages adhesion and movement. The sequence is that of Sodium channel protein type 8 subunit alpha from Homo sapiens (Human).